The primary structure comprises 608 residues: Chaperone protein HtpG (608 aa).

The interval M1–R332 is a; substrate-binding. Residues E333–Q536 are b. The segment at L537–S608 is c.

This sequence belongs to the heat shock protein 90 family. Homodimer.

The protein localises to the cytoplasm. Molecular chaperone. Has ATPase activity. This is Chaperone protein HtpG from Campylobacter jejuni subsp. jejuni serotype O:6 (strain 81116 / NCTC 11828).